Reading from the N-terminus, the 209-residue chain is Cytidylyl-2-hydroxypropylphosphonate hydrolase (209 aa).

A divalent metal cation contacts are provided by Asn111, Asp127, Glu129, and Asp131. Lys144 (proton donor) is an active-site residue. Asp145 is an a divalent metal cation binding site.

This sequence belongs to the FomD family. In terms of assembly, monomer in solution. Requires Mn(2+) as cofactor. The cofactor is Co(2+).

It catalyses the reaction cytidine 5'-({hydroxy[(S)-2-hydroxypropyl]phosphonoyl}phosphate) + H2O = (S)-2-hydroxypropylphosphonate + CMP + H(+). It functions in the pathway antibiotic biosynthesis; fosfomycin biosynthesis. Hydrolysis of (S)-HPP-CMP is inhibited by CDP. Functionally, involved in fosfomycin biosynthesis. Catalyzes the hydrolysis of cytidylyl (S)-2-hydroxypropylphosphonate ((S)-HPP-CMP) to give (S)-2-hydroxypropylphosphonate ((S)-HPP) and CMP. Can also hydrolyze (R)-HPP-CMP and cytidylyl 2-hydroxyethylphosphonate (HEP-CMP), which is a biosynthetic intermediate before C-methylation, but the catalytic efficiency is much higher with (S)-HPP-CMP. This is Cytidylyl-2-hydroxypropylphosphonate hydrolase from Streptomyces wedmorensis.